Reading from the N-terminus, the 551-residue chain is Solute carrier family 22 member 6 (551 aa).

The Cytoplasmic portion of the chain corresponds to 1–23 (MAFNDLLKQVGGVGRFQRIQVTL). A helical membrane pass occupies residues 24 to 44 (VVLPLLLMASHNTLQNFTAAI). Residues 45-135 (PPHHCRPPAH…LVCSHRALRQ (91 aa)) lie on the Extracellular side of the membrane. N56, N92, and N113 each carry an N-linked (GlcNAc...) asparagine glycan. A helical transmembrane segment spans residues 136–156 (LGQSLYMAGVLIGAMVFGYLA). Residues 157–164 (DRLGRRKV) lie on the Cytoplasmic side of the membrane. Residues 165–187 (LILNYLQTAVSGTCAAFSPNFTV) traverse the membrane as a helical segment. Residues 188–195 (YCTFRLLS) are Extracellular-facing. A helical transmembrane segment spans residues 196-216 (GMSLAGIALNCMTLNVEWMPI). Residues 217 to 224 (HTRAYVGT) are Cytoplasmic-facing. Residues 225–245 (LAGYVYSTGQFLLAGVAYAVP) form a helical membrane-spanning segment. The Extracellular segment spans residues 246 to 248 (HWR). Residues 249 to 269 (YLQLLVSVPFFAFFVYSWFFI) form a helical membrane-spanning segment. At 270 to 337 (ESARWYSTPG…ELLRCPALRH (68 aa)) the chain is on the cytoplasmic side. The helical transmembrane segment at 338 to 358 (LFLCLSLLWFATSFAYYGLVM) threads the bilayer. Residues 359–368 (DLQGFGVSIY) are Extracellular-facing. The chain crosses the membrane as a helical span at residues 369 to 389 (LIQVIFGAVDLPAKLVCFLVI). Topologically, residues 390–395 (NSLGRR) are cytoplasmic. The chain crosses the membrane as a helical span at residues 396–416 (PAQMASLLLAGICILVNGVIP). Residues 417–425 (RDQSIVRTS) lie on the Extracellular side of the membrane. A helical membrane pass occupies residues 426-446 (LAVLGKGCLASSFNCIFLYTG). Residues 447–484 (ELYPTMIRQTGLGMGSTMARVGSIVSPLVSMTSELYPS) lie on the Cytoplasmic side of the membrane. The helical transmembrane segment at 485 to 505 (LPLFIYGAVPVAASAATALLP) threads the bilayer. The Extracellular segment spans residues 506-551 (ETLGQPLPDTVQDLESRRRGKPRRQQQEQQKQMVPLQASVQEKNGL). The tract at residues 520-551 (ESRRRGKPRRQQQEQQKQMVPLQASVQEKNGL) is disordered.

It belongs to the major facilitator (TC 2.A.1) superfamily. Organic cation transporter (TC 2.A.1.19) family. Glycosylated. Glycosylation is necessary for proper targeting of the transporter to the plasma membrane.

Its subcellular location is the basolateral cell membrane. The protein localises to the basal cell membrane. It carries out the reaction (6R)-L-erythro-5,6,7,8-tetrahydrobiopterin(out) + a dicarboxylate(in) = (6R)-L-erythro-5,6,7,8-tetrahydrobiopterin(in) + a dicarboxylate(out). The catalysed reaction is L-erythro-7,8-dihydrobiopterin(out) + a dicarboxylate(in) = L-erythro-7,8-dihydrobiopterin(in) + a dicarboxylate(out). It catalyses the reaction L-sepiapterin(out) + a dicarboxylate(in) = L-sepiapterin(in) + a dicarboxylate(out). The enzyme catalyses prostaglandin F2alpha(out) + a dicarboxylate(in) = prostaglandin F2alpha(in) + a dicarboxylate(out). It carries out the reaction prostaglandin E2(out) + a dicarboxylate(in) = prostaglandin E2(in) + a dicarboxylate(out). The catalysed reaction is 3',5'-cyclic AMP(out) + a dicarboxylate(in) = 3',5'-cyclic AMP(in) + a dicarboxylate(out). It catalyses the reaction 3',5'-cyclic GMP(out) + a dicarboxylate(in) = 3',5'-cyclic GMP(in) + a dicarboxylate(out). The enzyme catalyses urate(out) + a dicarboxylate(in) = urate(in) + a dicarboxylate(out). It carries out the reaction kynurenate(out) + glutarate(in) = kynurenate(in) + glutarate(out). The catalysed reaction is (indol-3-yl)acetate(out) + a dicarboxylate(in) = (indol-3-yl)acetate(in) + a dicarboxylate(out). It catalyses the reaction indoxyl sulfate(out) + a dicarboxylate(in) = indoxyl sulfate(in) + a dicarboxylate(out). The enzyme catalyses N-benzoylglycine(out) + a dicarboxylate(in) = N-benzoylglycine(in) + a dicarboxylate(out). It carries out the reaction 3-carboxy-4-methyl-5-propyl-2-furanpropanoate(out) + a dicarboxylate(in) = 3-carboxy-4-methyl-5-propyl-2-furanpropanoate(in) + a dicarboxylate(out). In terms of biological role, secondary active transporter that functions as a Na(+)-independent organic anion (OA)/dicarboxylate antiporter where the uptake of one molecule of OA into the cell is coupled with an efflux of one molecule of intracellular dicarboxylate such as 2-oxoglutarate or glutarate. Mediates the uptake of OA across the basolateral side of proximal tubule epithelial cells, thereby contributing to the renal elimination of endogenous OA from the systemic circulation into the urine. Functions as a biopterin transporters involved in the uptake and the secretion of coenzymes tetrahydrobiopterin (BH4), dihydrobiopterin (BH2) and sepiapterin to urine, thereby determining baseline levels of blood biopterins. Transports prostaglandin E2 (PGE2) and prostaglandin F2-alpha (PGF2-alpha) and may contribute to their renal excretion. Also mediates the uptake of cyclic nucleotides such as cAMP and cGMP. Involved in the transport of neuroactive tryptophan metabolites kynurenate (KYNA) and xanthurenate (XA) and may contribute to their secretion from the brain. May transport glutamate. Also involved in the disposition of uremic toxins and potentially toxic xenobiotics by the renal organic anion secretory pathway, helping reduce their undesired toxicological effects on the body. Uremic toxins include the indoxyl sulfate (IS), hippurate/N-benzoylglycine (HA), indole acetate (IA), 3-carboxy-4- methyl-5-propyl-2-furanpropionate (CMPF) and urate. Xenobiotics include the mycotoxin ochratoxin (OTA). May also contribute to the transport of organic compounds in testes across the blood-testis-barrier. May also work as a bidirectional OA/dicarboxylate exchanger. The sequence is that of Solute carrier family 22 member 6 from Oryctolagus cuniculus (Rabbit).